Here is a 117-residue protein sequence, read N- to C-terminus: Large ribosomal subunit protein bL19 (117 aa).

Belongs to the bacterial ribosomal protein bL19 family.

This protein is located at the 30S-50S ribosomal subunit interface and may play a role in the structure and function of the aminoacyl-tRNA binding site. The polypeptide is Large ribosomal subunit protein bL19 (Shewanella denitrificans (strain OS217 / ATCC BAA-1090 / DSM 15013)).